The following is a 65-amino-acid chain: Large ribosomal subunit protein bL35 (65 aa).

It belongs to the bacterial ribosomal protein bL35 family.

This is Large ribosomal subunit protein bL35 from Paraburkholderia xenovorans (strain LB400).